A 615-amino-acid chain; its full sequence is Probable ATP-citrate synthase subunit 1 (615 aa).

Residues 221 to 241 (LIRFEADPACKLMVLLGEVGG) and 272 to 298 (FKTEVQFGHAGSFANSELETAVAKNQA) contribute to the ATP site. Glu-238 is a Mg(2+) binding site. Catalysis depends on His-280, which acts as the Tele-phosphohistidine intermediate. 299–309 (MREAGIYVPET) serves as a coordination point for CoA. Ser-359 carries the post-translational modification Phosphoserine.

It belongs to the succinate/malate CoA ligase alpha subunit family. In terms of assembly, composed of two subunits.

Its subcellular location is the cytoplasm. It carries out the reaction oxaloacetate + acetyl-CoA + ADP + phosphate = citrate + ATP + CoA. Catalyzes the formation of cytosolic acetyl-CoA, which is mainly used for the biosynthesis of fatty acids and sterols. The sequence is that of Probable ATP-citrate synthase subunit 1 from Schizosaccharomyces pombe (strain 972 / ATCC 24843) (Fission yeast).